The primary structure comprises 96 residues: Small ribosomal subunit protein bS6 (96 aa).

It belongs to the bacterial ribosomal protein bS6 family.

Its function is as follows. Binds together with bS18 to 16S ribosomal RNA. The protein is Small ribosomal subunit protein bS6 of Bacillus cereus (strain G9842).